A 77-amino-acid chain; its full sequence is DNA-directed RNA polymerase subunit Rpo5 (77 aa).

Belongs to the archaeal Rpo5/eukaryotic RPB5 RNA polymerase subunit family. Part of the RNA polymerase complex.

The protein resides in the cytoplasm. It catalyses the reaction RNA(n) + a ribonucleoside 5'-triphosphate = RNA(n+1) + diphosphate. Functionally, DNA-dependent RNA polymerase (RNAP) catalyzes the transcription of DNA into RNA using the four ribonucleoside triphosphates as substrates. In Methanosphaera stadtmanae (strain ATCC 43021 / DSM 3091 / JCM 11832 / MCB-3), this protein is DNA-directed RNA polymerase subunit Rpo5.